Reading from the N-terminus, the 743-residue chain is MEQTYQYAWIIPFLPLPVPMLIGLGLLLFPTATKSLRRMWAFQSVLLLSIVMIFSMNLSIQQINSSSVYQYVWSWIINNDFSLEFGYLIDPLTSIMSILITTVGIMVLIYSDNYMSHDHGYLRFFAYMSFFSTSMLGLVTSSNLIQIYIFWELVGMCSYLLIGFWFTRPVAAKACQKAFVTNRVGDFGLLLGILGFYWITGSFEFRDLFQIFNNLISNNEVNFLFVTLCAVLLFAGAIAKSAQFPLHVWLPDAMEGPTPISALIHAATMVAAGIFLVARLMPLFIVIPHIMNLISLIGIITVFFGATLALAQKDIKRGLAYSTMSQLGYMMLALGMGSYRSALFHLITHAYSKALLFLGSGSVIHSMETLVGYCPKKSQNMVLMGGLTKHVPITKNSFLLGTLSLCGIPPLACFWSKDEILNDSWLYSPIFAIIAWSTAGLTAFYMCRIYLLTFEGHLNVHFQNYSGKRNTPLYSISLWGKAGSKISNKNLNFRLVTLLKKKKNGRPSFFSNKVYKMDENVRNMIQPFLSIPNFDNTKTYLYPYESDNTMLFPILILILFTLFVGFLGIPFNQDVDILSKWLTPSINLLHQNSNNSIDWYEFCEDAVFSVSIASFGIYIAFFLYKPVYSSFQNLDLINSFVKMGPKRIFSDKIKNAIYDWSYNRGYIDAFYGTFFTAGVRKLAKFTHFFDRRIIDGIPNGVGFMSFFVAEVIKSVGGGRISSYLFFYFSYVSIFLFIYYFLNL.

16 helical membrane-spanning segments follow: residues 9 to 29 (WIIPFLPLPVPMLIGLGLLLF), 40 to 60 (WAFQSVLLLSIVMIFSMNLSI), 89 to 109 (IDPLTSIMSILITTVGIMVLI), 125 to 145 (FAYMSFFSTSMLGLVTSSNLI), 147 to 167 (IYIFWELVGMCSYLLIGFWFT), 185 to 205 (GDFGLLLGILGFYWITGSFEF), 219 to 239 (NEVNFLFVTLCAVLLFAGAIA), 258 to 278 (TPISALIHAATMVAAGIFLVA), 284 to 304 (FIVIPHIMNLISLIGIITVFF), 327 to 347 (LGYMMLALGMGSYRSALFHLI), 354 to 374 (ALLFLGSGSVIHSMETLVGYC), 396 to 416 (NSFLLGTLSLCGIPPLACFWS), 425 to 445 (WLYSPIFAIIAWSTAGLTAFY), 551 to 571 (LFPILILILFTLFVGFLGIPF), 607 to 627 (VFSVSIASFGIYIAFFLYKPV), and 723 to 743 (YLFFYFSYVSIFLFIYYFLNL).

Belongs to the complex I subunit 5 family. As to quaternary structure, NDH is composed of at least 16 different subunits, 5 of which are encoded in the nucleus.

Its subcellular location is the plastid. The protein localises to the chloroplast thylakoid membrane. It carries out the reaction a plastoquinone + NADH + (n+1) H(+)(in) = a plastoquinol + NAD(+) + n H(+)(out). The enzyme catalyses a plastoquinone + NADPH + (n+1) H(+)(in) = a plastoquinol + NADP(+) + n H(+)(out). Functionally, NDH shuttles electrons from NAD(P)H:plastoquinone, via FMN and iron-sulfur (Fe-S) centers, to quinones in the photosynthetic chain and possibly in a chloroplast respiratory chain. The immediate electron acceptor for the enzyme in this species is believed to be plastoquinone. Couples the redox reaction to proton translocation, and thus conserves the redox energy in a proton gradient. The protein is NAD(P)H-quinone oxidoreductase subunit 5, chloroplastic (ndhF) of Ambrosia trifida (Giant ragweed).